Here is a 162-residue protein sequence, read N- to C-terminus: NADH-quinone oxidoreductase subunit I (162 aa).

4Fe-4S ferredoxin-type domains are found at residues 52 to 82 (LRRYPNGEERCIACKLCEAICPAQAITIEAG) and 93 to 122 (VRYDIDMVKCIYCGLCQEACPVDAIVEGPN). Residues Cys-62, Cys-65, Cys-68, Cys-72, Cys-102, Cys-105, Cys-108, and Cys-112 each coordinate [4Fe-4S] cluster.

This sequence belongs to the complex I 23 kDa subunit family. In terms of assembly, NDH-1 is composed of 14 different subunits. Subunits NuoA, H, J, K, L, M, N constitute the membrane sector of the complex. Requires [4Fe-4S] cluster as cofactor.

Its subcellular location is the cell inner membrane. It carries out the reaction a quinone + NADH + 5 H(+)(in) = a quinol + NAD(+) + 4 H(+)(out). Its function is as follows. NDH-1 shuttles electrons from NADH, via FMN and iron-sulfur (Fe-S) centers, to quinones in the respiratory chain. The immediate electron acceptor for the enzyme in this species is believed to be ubiquinone. Couples the redox reaction to proton translocation (for every two electrons transferred, four hydrogen ions are translocated across the cytoplasmic membrane), and thus conserves the redox energy in a proton gradient. The sequence is that of NADH-quinone oxidoreductase subunit I from Afipia carboxidovorans (strain ATCC 49405 / DSM 1227 / KCTC 32145 / OM5) (Oligotropha carboxidovorans).